Here is a 501-residue protein sequence, read N- to C-terminus: E3 ubiquitin-protein ligase TRIM35 (501 aa).

N-acetylmethionine is present on methionine 1. Serine 8 is subject to Phosphoserine. Residues 21 to 61 form an RING-type zinc finger; sequence CAVCYDPFRDAVTLRCGHNFCRRCVSGCWEVQTTPSCPVCK. The B box-type zinc finger occupies 96 to 137; that stretch reads RSPRPCRAHRAPLTLFCLEDKELLCCACQADARHQEHRVQPI. Cysteine 101, histidine 104, cysteine 123, and histidine 129 together coordinate Zn(2+). Residues 200-252 are a coiled coil; that stretch reads VEEQATLDAMKEESRKKHLQAEEKMKQLAEQTEALAREIERLQMEMKEDDMTF. The 212-residue stretch at 284 to 495 folds into the B30.2/SPRY domain; that stretch reads LESLQYRVWK…LRICHLRVSI (212 aa).

This sequence belongs to the TRIM/RBCC family. Interacts with PKM isoform M2, but not isoform M1; this interaction may compete with that between PKM and FGFR1, and hence reduces FGFR1-dependent tyrosine phosphorylation of PKM. Interacts with IRF7; this interaction promotes IRF7 proteasomal degradation. Interacts with TRAF3; this interaction promotes TRAF3 activation. As to expression, widely expressed. Highly expressed in brain, heart, kidney, spleen, skeletal muscle, lung and thymus. Lower expression found in stomach, large intestine and bone marrow.

The protein resides in the cytoplasm. The protein localises to the nucleus. The enzyme catalyses S-ubiquitinyl-[E2 ubiquitin-conjugating enzyme]-L-cysteine + [acceptor protein]-L-lysine = [E2 ubiquitin-conjugating enzyme]-L-cysteine + N(6)-ubiquitinyl-[acceptor protein]-L-lysine.. The protein operates within protein modification; protein ubiquitination. In terms of biological role, E3 ubiquitin-protein ligase that participates in multiple biological processes including cell death, glucose metabolism, and in particular, the innate immune response. Mediates 'Lys-63'-linked polyubiquitination of TRAF3 thereby promoting type I interferon production via RIG-I signaling pathway. Can also catalyze 'Lys-48'-linked polyubiquitination and proteasomal degradation of viral proteins such as influenza virus PB2. Acts as a negative feedback regulator of TLR7- and TLR9-triggered signaling. Mechanistically, promotes the 'Lys-48'-linked ubiquitination of IRF7 and induces its degradation via a proteasome-dependent pathway. Reduces FGFR1-dependent tyrosine phosphorylation of PKM, inhibiting PKM-dependent lactate production, glucose metabolism, and cell growth. The sequence is that of E3 ubiquitin-protein ligase TRIM35 (Trim35) from Mus musculus (Mouse).